The primary structure comprises 173 residues: Alpha-crystallin A chain (173 aa).

N-acetylmethionine is present on methionine 1. The interval 1 to 63 (MDIAIQHPWF…RSVLDSGVSE (63 aa)) is required for complex formation with BFSP1 and BFSP2. Glutamine 6 bears the Deamidated glutamine; partial mark. At serine 45 the chain carries Phosphoserine. At glutamine 50 the chain carries Deamidated glutamine; partial. Residues 52 to 162 (LFRSVLDSGV…GHSERAIPVS (111 aa)) form the sHSP domain. Position 70 is an N6-acetyllysine (lysine 70). Glutamine 90 is modified (deamidated glutamine; partial). Residue lysine 99 is modified to N6-acetyllysine. Histidine 100 is a Zn(2+) binding site. Asparagine 101 is subject to Deamidated asparagine; partial. Glutamate 102 and histidine 107 together coordinate Zn(2+). Serine 122 carries the post-translational modification Phosphoserine. Asparagine 123 carries the post-translational modification Deamidated asparagine; partial. The segment at 144–173 (PKIPSGMDAGHSERAIPVSREEKPSSAPSS) is disordered. The span at 153–167 (GHSERAIPVSREEKP) shows a compositional bias: basic and acidic residues. Histidine 154 is a binding site for Zn(2+). Serine 162 is a glycosylation site (O-linked (GlcNAc) serine).

It belongs to the small heat shock protein (HSP20) family. As to quaternary structure, heteromer composed of three CRYAA and one CRYAB subunits. Inter-subunit bridging via zinc ions enhances stability, which is crucial as there is no protein turn over in the lens. Can also form homodimers and homotetramers (dimers of dimers) which serve as the building blocks of homooligomers. Within homooligomers, the zinc-binding motif is created from residues of 3 different molecules. His-100 and Glu-102 from one molecule are ligands of the zinc ion, and His-107 and His-154 residues from additional molecules complete the site with tetrahedral coordination geometry. Part of a complex required for lens intermediate filament formation composed of BFSP1, BFSP2 and CRYAA. Acetylation at Lys-70 may increase chaperone activity. In terms of processing, undergoes age-dependent proteolytical cleavage at the C-terminus.

Its subcellular location is the cytoplasm. It is found in the nucleus. Contributes to the transparency and refractive index of the lens. Acts as a chaperone, preventing aggregation of various proteins under a wide range of stress conditions. Required for the correct formation of lens intermediate filaments as part of a complex composed of BFSP1, BFSP2 and CRYAA. The protein is Alpha-crystallin A chain (CRYAA) of Ceratotherium simum (White rhinoceros).